The chain runs to 348 residues: Probable protein phosphatase 2C 35 (348 aa).

Over residues 11–24 (RYPSSSSDGDSRGP) the composition is skewed to low complexity. The disordered stretch occupies residues 11–40 (RYPSSSSDGDSRGPLEANGVLKGKDQKPLG). One can recognise a PPM-type phosphatase domain in the interval 52 to 342 (VYSVLSQRGY…DDITIIIVQI (291 aa)). Mn(2+) is bound by residues aspartate 93, glycine 94, aspartate 289, and aspartate 333.

This sequence belongs to the PP2C family. The cofactor is Mg(2+). Mn(2+) serves as cofactor.

The catalysed reaction is O-phospho-L-seryl-[protein] + H2O = L-seryl-[protein] + phosphate. It catalyses the reaction O-phospho-L-threonyl-[protein] + H2O = L-threonyl-[protein] + phosphate. The sequence is that of Probable protein phosphatase 2C 35 from Arabidopsis thaliana (Mouse-ear cress).